The chain runs to 564 residues: H/ACA ribonucleoprotein complex non-core subunit NAF1 (564 aa).

5 disordered regions span residues M1–K29, L108–G218, D238–G264, A387–Y489, and P538–S564. Low complexity predominate over residues A146–S157. A compositionally biased stretch (acidic residues) spans D238–A249. Position 250 is a phosphothreonine (T250). Residue S254 is modified to Phosphoserine. Over residues S388–H402 the composition is skewed to basic and acidic residues. A Phosphoserine modification is found at S403. Low complexity predominate over residues S426–V446. The residue at position 427 (T427) is a Phosphothreonine. Phosphoserine is present on S429. T432 bears the Phosphothreonine mark. Residues P468–Y489 show a composition bias toward polar residues. Residues P538 to N553 show a composition bias toward pro residues. Residues N554–S564 show a composition bias toward polar residues.

The protein belongs to the NAF1 family. As to quaternary structure, during assembly of the complex, component of the box H/ACA small nucleolar ribonucleoprotein (H/ACA snoRNP) complex.

It is found in the nucleus. RNA-binding protein required for the maturation of the box H/ACA small nucleolar ribonucleoprotein (H/ACA snoRNP) complex and ribosome biogenesis. During assembly of the H/ACA snoRNP complex it associates with the complex and dissociates during complex maturation, becoming replaced by Gar1 to yield mature H/ACA snoRNP complex. This Drosophila melanogaster (Fruit fly) protein is H/ACA ribonucleoprotein complex non-core subunit NAF1.